The following is a 323-amino-acid chain: Olfactory receptor 5P58 (323 aa).

At 1–28 the chain is on the extracellular side; it reads MAFLEDGNHTAVTEFILVGLTDDPVLKV. Residue N8 is glycosylated (N-linked (GlcNAc...) asparagine). A helical transmembrane segment spans residues 29–49; that stretch reads ILFTIILCIYLVTVSGNLSTI. Over 50-57 the chain is Cytoplasmic; it reads LLIRVSSQ. A helical transmembrane segment spans residues 58-78; it reads LHHPMYFFLSHLASVDLGYSS. Residues 79-102 lie on the Extracellular side of the membrane; sequence SVTPNMLINFLAENNTISYIGCSI. A glycan (N-linked (GlcNAc...) asparagine) is linked at N92. An intrachain disulfide couples C100 to C192. A helical transmembrane segment spans residues 103 to 123; the sequence is QFGSATFFGVLECFLLAVMAY. Over 124-136 the chain is Cytoplasmic; it reads DRFVAICNPLLYS. Residues 137–157 form a helical membrane-spanning segment; that stretch reads IKMSTQVCVKLVVGSYIGSSL. The Extracellular portion of the chain corresponds to 158–199; it reads NASFVTVSIFNLLFCGPNKINHFFCDFDPLIELSCSDVSVPV. A helical membrane pass occupies residues 200–220; that stretch reads AVTSCSAGLITMITVFVIAVS. At 221–240 the chain is on the cytoplasmic side; it reads YTYILITVLKMRSTEGRHKA. Residues 241-261 form a helical membrane-spanning segment; the sequence is FSTCTSHLTAVTLFYGTVTFI. Residues 262–274 lie on the Extracellular side of the membrane; that stretch reads YVMPKSNYSTDQN. N268 is a glycosylation site (N-linked (GlcNAc...) asparagine). A helical transmembrane segment spans residues 275-295; the sequence is KVVSVFYMVVIPMLNPLIYSL. Residues 296-323 lie on the Cytoplasmic side of the membrane; that stretch reads RNNEIKGALKRQLGKKIFSQSNILFCKS.

It belongs to the G-protein coupled receptor 1 family.

Its subcellular location is the cell membrane. Functionally, potential odorant receptor. This chain is Olfactory receptor 5P58, found in Mus musculus (Mouse).